Here is a 186-residue protein sequence, read N- to C-terminus: TATA box-binding protein-like 1 (186 aa).

It belongs to the TBP family. In terms of assembly, binds TFIIA and TFIIB.

The protein resides in the cytoplasm. It is found in the nucleus. Its function is as follows. Part of a specialized transcription system that mediates the transcription of most ribosomal proteins through the 5'-TCT-3' motif which is a core promoter element at these genes. Seems to also mediate the transcription of NF1. Does not bind the TATA box. This is TATA box-binding protein-like 1 (TBPL1) from Bos taurus (Bovine).